Reading from the N-terminus, the 351-residue chain is Delta(7)-sterol 5(6)-desaturase (351 aa).

Helical transmembrane passes span 88–108, 136–156, and 173–193; these read LSLF…VASF, GLGA…LELH, and VRLA…IYLL. Residues 180–305 form the Fatty acid hydroxylase domain; it reads LFFILFTDFG…FTTLWDRLGG (126 aa). The Histidine box-1 motif lies at 194–198; that stretch reads HRWLH. The short motif at 207-211 is the Histidine box-2 element; the sequence is HKKHH. The chain crosses the membrane as a helical span at residues 237-257; that stretch reads HLFPMLFPLHKVSYLVLFTFV. The Histidine box-3 signature appears at 282–286; the sequence is HTVHH.

Belongs to the sterol desaturase family. Fe cation is required as a cofactor.

It localises to the endoplasmic reticulum membrane. The enzyme catalyses a Delta(7)-sterol + 2 Fe(II)-[cytochrome b5] + O2 + 2 H(+) = a Delta(5),Delta(7)-sterol + 2 Fe(III)-[cytochrome b5] + 2 H2O. It participates in steroid metabolism; ergosterol biosynthesis; ergosterol from zymosterol: step 3/5. Catalyzes the introduction of a C-5 double bond in the B ring of ergosterol. May contribute to the regulation of ergosterol biosynthesis. The protein is Delta(7)-sterol 5(6)-desaturase (ERG3) of Eremothecium gossypii (strain ATCC 10895 / CBS 109.51 / FGSC 9923 / NRRL Y-1056) (Yeast).